We begin with the raw amino-acid sequence, 73 residues long: Large ribosomal subunit protein bL31 (73 aa).

It belongs to the bacterial ribosomal protein bL31 family. Type A subfamily. In terms of assembly, part of the 50S ribosomal subunit.

Its function is as follows. Binds the 23S rRNA. In Ruegeria sp. (strain TM1040) (Silicibacter sp.), this protein is Large ribosomal subunit protein bL31.